A 526-amino-acid chain; its full sequence is MKSKSSLLKSGLLLSLLTLVSRVLGLAREVVKSTLMGTSATADAFTVAFMIPNLFRRLFAENAISVAFIPVFTQHYSMPSSAQVPCSSKTKEFLSAIFTLMSSVTASISLIGILGAPYIVRLFDTDQSLTVSLTRLMFPYLWMISLAAFFQGMLHSIKVFVPSGCTPIFFNVSVIFSMYFLNVSHMNVAIAAAIGVLIGGCAQALFQLIFVYMHGFRFTLQSPLKAMHDEGVRRIIALLLPTTVGIATYLLNDLVCTALATSVEIGVAASVQYSLRIQELLLGIFIVSLSSVVLPDLSFHVMRKDWQSFEDLLITAIKIVMLITIPATFFVLFSSDRIITLVYKNAIFNELSVRMTATIFRWHSVGMLAIALNRVLISAFYAQHNSFAPMIAGTISFVTNIILATLLFIPLGGKGIAFSLSAASMVQTVFLWMFLKRSWQITIPSLYKTSLYYGVKITLFSVIALVPTWASSFFTAYFFPGSHKIISHGVPLCVEALIFSCTGCILLLLSRDEFAYKALRSIRFCR.

The next 14 helical transmembrane spans lie at 35–55 (LMGTSATADAFTVAFMIPNLF), 58–78 (LFAENAISVAFIPVFTQHYSM), 96–116 (AIFTLMSSVTASISLIGILGA), 137–157 (MFPYLWMISLAAFFQGMLHSI), 160–180 (FVPSGCTPIFFNVSVIFSMYF), 190–210 (IAAAIGVLIGGCAQALFQLIF), 235–255 (IIALLLPTTVGIATYLLNDLV), 281–301 (LLGIFIVSLSSVVLPDLSFHV), 313–333 (LITAIKIVMLITIPATFFVLF), 362–382 (WHSVGMLAIALNRVLISAFYA), 391–411 (IAGTISFVTNIILATLLFIPL), 415–435 (GIAFSLSAASMVQTVFLWMFL), 459–479 (LFSVIALVPTWASSFFTAYFF), and 489–509 (GVPLCVEALIFSCTGCILLLL).

This sequence belongs to the MurJ/MviN family.

The protein localises to the cell inner membrane. The protein operates within cell wall biogenesis; peptidoglycan biosynthesis. Functionally, involved in peptidoglycan biosynthesis. Transports lipid-linked peptidoglycan precursors from the inner to the outer leaflet of the cytoplasmic membrane. This chain is Probable lipid II flippase MurJ, found in Treponema pallidum (strain Nichols).